We begin with the raw amino-acid sequence, 224 residues long: Processed variable antigen (224 aa).

Tandem repeats lie at residues 1–6, 7–12, 13–18, 19–24, 25–30, 31–36, 37–42, 43–48, 49–54, 55–60, 61–66, 67–72, 73–78, 79–84, 85–90, 91–96, and 97–102. Residues 1–102 are 17 X 6 AA tandem repeats of E-T-G-E-S-K; it reads ETGESKETGE…GESKETGESK (102 aa). Basic and acidic residues predominate over residues 1 to 137; the sequence is ETGESKETGE…TEESKDREGN (137 aa). The segment at 1–224 is disordered; that stretch reads ETGESKETGE…KKADNKKKKK (224 aa). Low complexity predominate over residues 144-153; sequence ENSENSNVTS. Basic and acidic residues-rich tracts occupy residues 156–173 and 185–217; these read EETKKLAEKEENEGEKLG and EDPKKLTEQEENGTKESSEETKDDKPEENEKKA.

The protein is Processed variable antigen of Plasmodium falciparum.